The chain runs to 407 residues: Zinc finger protein 260 (407 aa).

Residues 1–21 (MLESLQPESELLHDEPDPGEK) form a disordered region. Positions 10–21 (ELLHDEPDPGEK) are enriched in basic and acidic residues. Residues 23 to 45 (YECDECRKTFSLEQHFVEHKKTH) form a C2H2-type 1 zinc finger. The C2H2-type 2; degenerate zinc finger occupies 51–73 (PECTGCGEEFSKASSLTRHLRSR). C2H2-type zinc fingers lie at residues 79-101 (YKCG…QKQH), 131-153 (YACK…EKIH), 159-181 (FECN…QNVH), 187-209 (FKCN…QRIH), 215-237 (YECK…QRSH), 243-265 (YTCK…EKIH), 271-293 (YKCN…HNIH), 299-321 (YECN…VRIH), 327-349 (YECK…MRSH), 355-377 (YGCN…MRIH), and 383-405 (YQCS…QRIH).

Belongs to the krueppel C2H2-type zinc-finger protein family. In terms of assembly, binds DNA. Interacts with GATA4. Expressed in both embryonic, fetal and adult heart. Also expressed in lung, skeletal muscle and adrenal glands.

It is found in the nucleus. In terms of biological role, transcription factor that acts as a cardiac regulator and an effector of alpha1-adrenergic signaling. Binds to PE response elements (PERE) present in the promoter of genes such as ANF/NPPA and acts as a direct transcriptional activator of NPPA. Also acts as a cofactor with GATA4, a key cardiac regulator. This Rattus norvegicus (Rat) protein is Zinc finger protein 260 (Znf260).